Here is a 100-residue protein sequence, read N- to C-terminus: Urease subunit gamma (100 aa).

Belongs to the urease gamma subunit family. As to quaternary structure, heterotrimer of UreA (gamma), UreB (beta) and UreC (alpha) subunits. Three heterotrimers associate to form the active enzyme.

Its subcellular location is the cytoplasm. The enzyme catalyses urea + 2 H2O + H(+) = hydrogencarbonate + 2 NH4(+). Its pathway is nitrogen metabolism; urea degradation; CO(2) and NH(3) from urea (urease route): step 1/1. This chain is Urease subunit gamma, found in Acinetobacter baylyi (strain ATCC 33305 / BD413 / ADP1).